A 101-amino-acid polypeptide reads, in one-letter code: Integration host factor subunit alpha (101 aa).

This sequence belongs to the bacterial histone-like protein family. In terms of assembly, heterodimer of an alpha and a beta chain.

Its function is as follows. This protein is one of the two subunits of integration host factor, a specific DNA-binding protein that functions in genetic recombination as well as in transcriptional and translational control. The sequence is that of Integration host factor subunit alpha from Maricaulis maris (strain MCS10) (Caulobacter maris).